The sequence spans 155 residues: SsrA-binding protein (155 aa).

Residues 127-149 (KKDYDKRNDMRKKEAKREMERTF) are compositionally biased toward basic and acidic residues. Residues 127–155 (KKDYDKRNDMRKKEAKREMERTFKSKNQY) form a disordered region.

It belongs to the SmpB family.

It is found in the cytoplasm. In terms of biological role, required for rescue of stalled ribosomes mediated by trans-translation. Binds to transfer-messenger RNA (tmRNA), required for stable association of tmRNA with ribosomes. tmRNA and SmpB together mimic tRNA shape, replacing the anticodon stem-loop with SmpB. tmRNA is encoded by the ssrA gene; the 2 termini fold to resemble tRNA(Ala) and it encodes a 'tag peptide', a short internal open reading frame. During trans-translation Ala-aminoacylated tmRNA acts like a tRNA, entering the A-site of stalled ribosomes, displacing the stalled mRNA. The ribosome then switches to translate the ORF on the tmRNA; the nascent peptide is terminated with the 'tag peptide' encoded by the tmRNA and targeted for degradation. The ribosome is freed to recommence translation, which seems to be the essential function of trans-translation. The polypeptide is SsrA-binding protein (Lysinibacillus sphaericus (strain C3-41)).